We begin with the raw amino-acid sequence, 232 residues long: Sugar fermentation stimulation protein homolog (232 aa).

Belongs to the SfsA family.

The polypeptide is Sugar fermentation stimulation protein homolog (Ruegeria sp. (strain TM1040) (Silicibacter sp.)).